Here is a 210-residue protein sequence, read N- to C-terminus: Glycerol-3-phosphate acyltransferase (210 aa).

5 helical membrane passes run methionine 1–glycine 21, glycine 53–alanine 73, isoleucine 87–tryptophan 107, valine 122–leucine 142, and isoleucine 147–proline 167.

This sequence belongs to the PlsY family. In terms of assembly, probably interacts with PlsX.

The protein localises to the cell inner membrane. It catalyses the reaction an acyl phosphate + sn-glycerol 3-phosphate = a 1-acyl-sn-glycero-3-phosphate + phosphate. It participates in lipid metabolism; phospholipid metabolism. In terms of biological role, catalyzes the transfer of an acyl group from acyl-phosphate (acyl-PO(4)) to glycerol-3-phosphate (G3P) to form lysophosphatidic acid (LPA). This enzyme utilizes acyl-phosphate as fatty acyl donor, but not acyl-CoA or acyl-ACP. This Synechococcus elongatus (strain ATCC 33912 / PCC 7942 / FACHB-805) (Anacystis nidulans R2) protein is Glycerol-3-phosphate acyltransferase.